The chain runs to 406 residues: Putative phosphate permease TK2061 (406 aa).

Transmembrane regions (helical) follow at residues 2–22 (AVMD…AWAI), 45–65 (AVLI…KSVT), 82–102 (TVLI…LVIA), 115–135 (IIGG…VNWG), 139–159 (QVVL…FLVF), 182–202 (FWIG…VLHG), 208–228 (GVLF…FLTL), 288–308 (VPVP…GVAT), 324–346 (LTNT…ASWL), and 385–405 (FVTV…LMIV).

It belongs to the inorganic phosphate transporter (PiT) (TC 2.A.20) family.

The protein localises to the cell membrane. Its function is as follows. Potential transporter for phosphate. The protein is Putative phosphate permease TK2061 of Thermococcus kodakarensis (strain ATCC BAA-918 / JCM 12380 / KOD1) (Pyrococcus kodakaraensis (strain KOD1)).